Reading from the N-terminus, the 1188-residue chain is NF-X1-type zinc finger protein NFXL1 (1188 aa).

Basic and acidic residues predominate over residues 1–15 (MSFQVRRDRSDDRSH). Disordered regions lie at residues 1–52 (MSFQ…ETLD) and 65–195 (QHNA…VAKE). 2 stretches are compositionally biased toward polar residues: residues 19–34 (HQQT…SSVV) and 168–186 (ASGT…TRPV). The segment at 223-279 (CMICYDKVGRSANIWSCSSCYSIFHINCIKRWARAPTSVDLLAEKNQGDNWRCPGCQ) adopts an RING-type; degenerate zinc-finger fold. 9 NF-X1-type zinc fingers span residues 335 to 353 (CPHV…PCKA), 390 to 409 (CGRH…PCQV), 454 to 473 (CGNH…DCDL), 513 to 532 (CRLH…PCLV), 572 to 607 (CGRH…PCQK), 611 to 630 (CGQH…PCLE), 668 to 686 (CGHS…PCST), 721 to 751 (CGMH…TCRQ), and 760 to 781 (CRHT…RCEF). The 70-residue stretch at 894-963 (PKWVLAVEER…KRFTVVHVTA (70 aa)) folds into the R3H domain. Positions 1100 to 1188 (SDDSWGAEDS…VVDDWEKVCE (89 aa)) are disordered. 2 stretches are compositionally biased toward polar residues: residues 1126–1138 (AKSN…SVNR) and 1159–1169 (EESSSSKTTGK).

It belongs to the NFX1 family. Expressed in seedlings, roots, stems, leaves, buds, flowers and siliques.

The protein localises to the nucleus. Its pathway is protein modification; protein ubiquitination. Functionally, mediates E2-dependent ubiquitination. Confers resistance to osmotic stress such as high salinity. Promotes H(2)O(2) production. Negative regulator of some defense-related genes via an salicylic acid (SA)-dependent signaling pathway. Confers susceptibility to the compatible phytopathogen Pseudomonas syringae pv. tomato strain DC3000 (Pst DC3000). Mediates resistance to type A trichothecenes (phytotoxins produced by phytopathogenic fungi). The chain is NF-X1-type zinc finger protein NFXL1 (NFXL1) from Arabidopsis thaliana (Mouse-ear cress).